We begin with the raw amino-acid sequence, 244 residues long: Carboxy-S-adenosyl-L-methionine synthase (244 aa).

S-adenosyl-L-methionine-binding positions include Tyr40, 65–67 (GCS), 90–91 (DN), 119–120 (DL), Asn134, and Arg201.

The protein belongs to the class I-like SAM-binding methyltransferase superfamily. Cx-SAM synthase family. As to quaternary structure, homodimer.

The catalysed reaction is prephenate + S-adenosyl-L-methionine = carboxy-S-adenosyl-L-methionine + 3-phenylpyruvate + H2O. In terms of biological role, catalyzes the conversion of S-adenosyl-L-methionine (SAM) to carboxy-S-adenosyl-L-methionine (Cx-SAM). In Geobacter metallireducens (strain ATCC 53774 / DSM 7210 / GS-15), this protein is Carboxy-S-adenosyl-L-methionine synthase.